The primary structure comprises 341 residues: Phenazine O-methyltransferase PhzM (341 aa).

Residues aspartate 205 and 231–233 (GDF) contribute to the S-adenosyl-L-methionine site. The Proton acceptor role is filled by histidine 251.

It belongs to the class I-like SAM-binding methyltransferase superfamily. Cation-independent O-methyltransferase family. In terms of assembly, homodimer.

The enzyme catalyses 1,6-dihydroxyphenazine + S-adenosyl-L-methionine = 1-hydroxy-6-methoxyphenazine + S-adenosyl-L-homocysteine + H(+). The catalysed reaction is 1-hydroxy-6-methoxyphenazine + S-adenosyl-L-methionine = 1,6-dimethoxyphenazine + S-adenosyl-L-homocysteine + H(+). It carries out the reaction 1-hydroxy-6-methoxyphenazine N(10)-oxide + S-adenosyl-L-methionine = 1,6-dimethoxyphenazine N(5)-oxide + S-adenosyl-L-homocysteine. It catalyses the reaction 1,6-dihydroxyphenazine N(5),N(10)-dioxide + S-adenosyl-L-methionine = 1-hydroxy-6-methoxyphenazine N(5),N(10)-dioxide + S-adenosyl-L-homocysteine. The enzyme catalyses 1-hydroxy-6-methoxyphenazine N(5),N(10)-dioxide + S-adenosyl-L-methionine = 1,6-dimethoxyphenazine N(5),N(10)-dioxide + S-adenosyl-L-homocysteine. Its function is as follows. Involved in the biosynthesis of phenazine natural products including myxin, an N(5),N(10)-dioxide phenazine antiobiotic, which has antimicrobial activity. O-methyltransferase, which converts iodinin (1,6-dihydroxyphenazine N(5),N(10)-dioxide) to myxin (1-hydroxy-6-methoxyphenazine N(5),N(10)-dioxide). Catalyzes both monomethoxy and dimethoxy formation of phenazine natural compounds. Acts on a wide variety of substrates, catalyzing O-methylation of phenazines with non-, mono- or di-N-oxide. Highest activity with 1,6-dihydroxyphenazine (DHP) as substrate. Less active with monohydroxy-containing and monohydroxy-monomethoxy-containing phenazines. Least active with non-phenazine substrates, such as 8-hydroxyquinoline and 6-hydroxyquinoline. Is not able to convert 1-hydroxyphenazine to 1-hydroxy-N5-methylphenazine (pyocyanine), hence does not function as an N-methyltransferase. This chain is Phenazine O-methyltransferase PhzM, found in Lysobacter antibioticus.